A 284-amino-acid chain; its full sequence is 4-hydroxy-3-methylbut-2-enyl diphosphate reductase (284 aa).

Residue cysteine 12 participates in [4Fe-4S] cluster binding. (2E)-4-hydroxy-3-methylbut-2-enyl diphosphate is bound by residues histidine 40 and histidine 76. Dimethylallyl diphosphate-binding residues include histidine 40 and histidine 76. Residues histidine 40 and histidine 76 each coordinate isopentenyl diphosphate. Cysteine 98 serves as a coordination point for [4Fe-4S] cluster. Position 126 (histidine 126) interacts with (2E)-4-hydroxy-3-methylbut-2-enyl diphosphate. Histidine 126 provides a ligand contact to dimethylallyl diphosphate. Histidine 126 contacts isopentenyl diphosphate. Glutamate 128 serves as the catalytic Proton donor. Threonine 161 is a (2E)-4-hydroxy-3-methylbut-2-enyl diphosphate binding site. Cysteine 191 provides a ligand contact to [4Fe-4S] cluster. 4 residues coordinate (2E)-4-hydroxy-3-methylbut-2-enyl diphosphate: serine 219, serine 220, asparagine 221, and serine 263. 4 residues coordinate dimethylallyl diphosphate: serine 219, serine 220, asparagine 221, and serine 263. Serine 219, serine 220, asparagine 221, and serine 263 together coordinate isopentenyl diphosphate.

The protein belongs to the IspH family. The cofactor is [4Fe-4S] cluster.

It catalyses the reaction isopentenyl diphosphate + 2 oxidized [2Fe-2S]-[ferredoxin] + H2O = (2E)-4-hydroxy-3-methylbut-2-enyl diphosphate + 2 reduced [2Fe-2S]-[ferredoxin] + 2 H(+). It carries out the reaction dimethylallyl diphosphate + 2 oxidized [2Fe-2S]-[ferredoxin] + H2O = (2E)-4-hydroxy-3-methylbut-2-enyl diphosphate + 2 reduced [2Fe-2S]-[ferredoxin] + 2 H(+). It participates in isoprenoid biosynthesis; dimethylallyl diphosphate biosynthesis; dimethylallyl diphosphate from (2E)-4-hydroxy-3-methylbutenyl diphosphate: step 1/1. The protein operates within isoprenoid biosynthesis; isopentenyl diphosphate biosynthesis via DXP pathway; isopentenyl diphosphate from 1-deoxy-D-xylulose 5-phosphate: step 6/6. In terms of biological role, catalyzes the conversion of 1-hydroxy-2-methyl-2-(E)-butenyl 4-diphosphate (HMBPP) into a mixture of isopentenyl diphosphate (IPP) and dimethylallyl diphosphate (DMAPP). Acts in the terminal step of the DOXP/MEP pathway for isoprenoid precursor biosynthesis. This chain is 4-hydroxy-3-methylbut-2-enyl diphosphate reductase, found in Petrotoga mobilis (strain DSM 10674 / SJ95).